A 98-amino-acid chain; its full sequence is Large ribosomal subunit protein bL25 (98 aa).

The disordered stretch occupies residues 1–22 (MANFVLNATARNEDKQGKGASR).

Belongs to the bacterial ribosomal protein bL25 family. Part of the 50S ribosomal subunit; part of the 5S rRNA/L5/L18/L25 subcomplex. Contacts the 5S rRNA. Binds to the 5S rRNA independently of L5 and L18.

In terms of biological role, this is one of the proteins that binds to the 5S RNA in the ribosome where it forms part of the central protuberance. The polypeptide is Large ribosomal subunit protein bL25 (Acinetobacter baylyi (strain ATCC 33305 / BD413 / ADP1)).